The sequence spans 511 residues: GMP synthase [glutamine-hydrolyzing] (511 aa).

A Glutamine amidotransferase type-1 domain is found at 5–195 (DILVLDFGSQ…AKYACNCESV (191 aa)). Cysteine 82 (nucleophile) is an active-site residue. Catalysis depends on residues histidine 169 and glutamate 171. The 191-residue stretch at 196–386 (WNMGSFAKTQ…LGLSKEVVYR (191 aa)) folds into the GMPS ATP-PPase domain. Residue 223 to 229 (SGGVDSS) coordinates ATP.

In terms of assembly, homodimer.

It carries out the reaction XMP + L-glutamine + ATP + H2O = GMP + L-glutamate + AMP + diphosphate + 2 H(+). The protein operates within purine metabolism; GMP biosynthesis; GMP from XMP (L-Gln route): step 1/1. In terms of biological role, catalyzes the synthesis of GMP from XMP. In Campylobacter jejuni subsp. doylei (strain ATCC BAA-1458 / RM4099 / 269.97), this protein is GMP synthase [glutamine-hydrolyzing].